Here is a 365-residue protein sequence, read N- to C-terminus: Chaperone protein DnaJ (365 aa).

The region spanning 4–70 (DYYKILGVDR…QKRRMYDQTG (67 aa)) is the J domain. The segment at 139-220 (GTEKRIKYRR…CNGTGTVVVN (82 aa)) adopts a CR-type zinc-finger fold. Cys152, Cys155, Cys168, Cys171, Cys194, Cys197, Cys208, and Cys211 together coordinate Zn(2+). CXXCXGXG motif repeat units lie at residues 152–159 (CPDCNGTG), 168–175 (CPTCNGTG), 194–201 (CQTCGGRG), and 208–215 (CPRCNGTG).

It belongs to the DnaJ family. Homodimer. The cofactor is Zn(2+).

Its subcellular location is the cytoplasm. Functionally, participates actively in the response to hyperosmotic and heat shock by preventing the aggregation of stress-denatured proteins and by disaggregating proteins, also in an autonomous, DnaK-independent fashion. Unfolded proteins bind initially to DnaJ; upon interaction with the DnaJ-bound protein, DnaK hydrolyzes its bound ATP, resulting in the formation of a stable complex. GrpE releases ADP from DnaK; ATP binding to DnaK triggers the release of the substrate protein, thus completing the reaction cycle. Several rounds of ATP-dependent interactions between DnaJ, DnaK and GrpE are required for fully efficient folding. Also involved, together with DnaK and GrpE, in the DNA replication of plasmids through activation of initiation proteins. In Thermoplasma acidophilum (strain ATCC 25905 / DSM 1728 / JCM 9062 / NBRC 15155 / AMRC-C165), this protein is Chaperone protein DnaJ.